The chain runs to 213 residues: Carboxysome shell protein CcmP (213 aa).

BMC circularly permuted domains lie at 4–106 and 107–211; these read ELRS…RLKP and KIVS…GDRS. Residues 69-70 carry the Probably important for pore gating motif; sequence ER.

The protein belongs to the EutL/PduB family. In terms of assembly, a dimer of stacked trimers, the same faces interact.

It localises to the carboxysome. Probably part of the carboxysome shell, a polyhedral inclusion where RuBisCO (ribulose bisphosphate carboxylase, rbcL-rbcS) is sequestered. It is thought that this protein controls transport of RuBisCO reactants in and out of the carboxysome; residual densities in the 4 X-ray structures suggest that differing compounds bind in interior pockets, depending on the open or closed state of the pore. In Synechococcus elongatus (strain ATCC 33912 / PCC 7942 / FACHB-805) (Anacystis nidulans R2), this protein is Carboxysome shell protein CcmP.